The chain runs to 329 residues: Carbohydrate sulfotransferase chst-1 (329 aa).

Over 1–3 (MLK) the chain is Cytoplasmic. A helical; Signal-anchor for type II membrane protein transmembrane segment spans residues 4–23 (WFIISCCLLTAISYSTYYLF). The Lumenal segment spans residues 24–329 (TSNSWIKTVK…FDFDTTFINS (306 aa)). 3'-phosphoadenylyl sulfate-binding positions include 91-97 (KKSMSTL) and 157-165 (RDPIARFIS).

Belongs to the sulfotransferase 2 family. Highly expressed in the head and tail of hermaphrodites, in particular in amphid and phasmid sheath cells.

The protein localises to the golgi apparatus membrane. The enzyme catalyses chondroitin beta-D-glucuronate + n 3'-phosphoadenylyl sulfate = chondroitin 4'-sulfate + n adenosine 3',5'-bisphosphate + n H(+). Catalyzes the transfer of sulfate to position 4 of non-reducing N-acetylgalactosamine (GalNAc) residue of chondroitin. This is Carbohydrate sulfotransferase chst-1 from Caenorhabditis elegans.